Here is a 368-residue protein sequence, read N- to C-terminus: Phosphoserine aminotransferase (368 aa).

Residue R44 participates in L-glutamate binding. Pyridoxal 5'-phosphate is bound by residues 78–79 (AT), W104, T157, D179, and Q202. At K203 the chain carries N6-(pyridoxal phosphate)lysine. 244–245 (NT) is a binding site for pyridoxal 5'-phosphate.

Belongs to the class-V pyridoxal-phosphate-dependent aminotransferase family. SerC subfamily. In terms of assembly, homodimer. Pyridoxal 5'-phosphate is required as a cofactor.

The protein localises to the cytoplasm. The enzyme catalyses O-phospho-L-serine + 2-oxoglutarate = 3-phosphooxypyruvate + L-glutamate. The catalysed reaction is 4-(phosphooxy)-L-threonine + 2-oxoglutarate = (R)-3-hydroxy-2-oxo-4-phosphooxybutanoate + L-glutamate. It participates in amino-acid biosynthesis; L-serine biosynthesis; L-serine from 3-phospho-D-glycerate: step 2/3. Its pathway is cofactor biosynthesis; pyridoxine 5'-phosphate biosynthesis; pyridoxine 5'-phosphate from D-erythrose 4-phosphate: step 3/5. In terms of biological role, catalyzes the reversible conversion of 3-phosphohydroxypyruvate to phosphoserine and of 3-hydroxy-2-oxo-4-phosphonooxybutanoate to phosphohydroxythreonine. In Neisseria meningitidis serogroup B (strain ATCC BAA-335 / MC58), this protein is Phosphoserine aminotransferase.